The following is a 237-amino-acid chain: Riboflavin kinase (237 aa).

The interval 1–101 (MRLKIKAIWV…SRIFSSEPDV (101 aa)) is unknown. The segment at 102-237 (LELEGNVLKG…VKKQGMEGQK (136 aa)) is riboflavin kinase. Position 111-116 (111-116 (GLGEGQ)) interacts with CDP. 2 residues coordinate Mg(2+): Thr-140 and Asn-142. FMN is bound by residues Thr-197 and Glu-205. 210–213 (VKLR) contributes to the CDP binding site.

The protein belongs to the archaeal riboflavin kinase family. Requires Mg(2+) as cofactor.

It carries out the reaction riboflavin + CTP = CDP + FMN + H(+). Its pathway is cofactor biosynthesis; FMN biosynthesis; FMN from riboflavin (CTP route): step 1/1. In terms of biological role, catalyzes the CTP-dependent phosphorylation of riboflavin (vitamin B2) to form flavin mononucleotide (FMN). This is Riboflavin kinase (ribK) from Methanosarcina acetivorans (strain ATCC 35395 / DSM 2834 / JCM 12185 / C2A).